Consider the following 218-residue polypeptide: Glutathione S-transferase D7 (218 aa).

The 82-residue stretch at 1-82 (MTPVLYYLPP…YLVSAYGKDE (82 aa)) folds into the GST N-terminal domain. Residues S11, 52 to 54 (HCI), and 66 to 68 (ESR) contribute to the glutathione site. Residues 88–207 (DFRSRAIVDQ…KEINETGAET (120 aa)) form the GST C-terminal domain.

Belongs to the GST superfamily. Theta family. Homodimer.

The enzyme catalyses RX + glutathione = an S-substituted glutathione + a halide anion + H(+). Functionally, conjugation of reduced glutathione to a wide number of exogenous and endogenous hydrophobic electrophiles. This is Glutathione S-transferase D7 from Anopheles gambiae (African malaria mosquito).